Here is a 141-residue protein sequence, read N- to C-terminus: Ribosome-binding factor A (141 aa).

The protein belongs to the RbfA family. Monomer. Binds 30S ribosomal subunits, but not 50S ribosomal subunits or 70S ribosomes.

The protein resides in the cytoplasm. One of several proteins that assist in the late maturation steps of the functional core of the 30S ribosomal subunit. Associates with free 30S ribosomal subunits (but not with 30S subunits that are part of 70S ribosomes or polysomes). Required for efficient processing of 16S rRNA. May interact with the 5'-terminal helix region of 16S rRNA. This is Ribosome-binding factor A from Beijerinckia indica subsp. indica (strain ATCC 9039 / DSM 1715 / NCIMB 8712).